A 199-amino-acid chain; its full sequence is Probable thymidylate kinase (199 aa).

13–20 (GIDGAGKT) serves as a coordination point for ATP.

This sequence belongs to the thymidylate kinase family.

It catalyses the reaction dTMP + ATP = dTDP + ADP. The sequence is that of Probable thymidylate kinase from Staphylothermus marinus (strain ATCC 43588 / DSM 3639 / JCM 9404 / F1).